We begin with the raw amino-acid sequence, 293 residues long: Ribosomal protein L11 methyltransferase (293 aa).

The S-adenosyl-L-methionine site is built by T145, G166, D188, and N229.

It belongs to the methyltransferase superfamily. PrmA family.

The protein localises to the cytoplasm. The catalysed reaction is L-lysyl-[protein] + 3 S-adenosyl-L-methionine = N(6),N(6),N(6)-trimethyl-L-lysyl-[protein] + 3 S-adenosyl-L-homocysteine + 3 H(+). In terms of biological role, methylates ribosomal protein L11. This Idiomarina loihiensis (strain ATCC BAA-735 / DSM 15497 / L2-TR) protein is Ribosomal protein L11 methyltransferase.